The sequence spans 601 residues: Elongation factor 4 (601 aa).

The region spanning 7 to 189 (SHIRNFSIIA…SIVQLVPPPQ (183 aa)) is the tr-type G domain. GTP-binding positions include 19-24 (DHGKST) and 136-139 (NKID).

It belongs to the TRAFAC class translation factor GTPase superfamily. Classic translation factor GTPase family. LepA subfamily.

It is found in the cell inner membrane. The catalysed reaction is GTP + H2O = GDP + phosphate + H(+). Functionally, required for accurate and efficient protein synthesis under certain stress conditions. May act as a fidelity factor of the translation reaction, by catalyzing a one-codon backward translocation of tRNAs on improperly translocated ribosomes. Back-translocation proceeds from a post-translocation (POST) complex to a pre-translocation (PRE) complex, thus giving elongation factor G a second chance to translocate the tRNAs correctly. Binds to ribosomes in a GTP-dependent manner. The protein is Elongation factor 4 of Trichodesmium erythraeum (strain IMS101).